Reading from the N-terminus, the 159-residue chain is Phosphopantetheine adenylyltransferase (159 aa).

Residue S9 coordinates substrate. Residues 9 to 10 and H17 contribute to the ATP site; that span reads SF. Substrate is bound by residues K41, L74, and K88. Residues 89–91, E99, and 123–129 contribute to the ATP site; these read GLR and YGYISST.

This sequence belongs to the bacterial CoaD family. As to quaternary structure, homohexamer. It depends on Mg(2+) as a cofactor.

The protein resides in the cytoplasm. The enzyme catalyses (R)-4'-phosphopantetheine + ATP + H(+) = 3'-dephospho-CoA + diphosphate. It participates in cofactor biosynthesis; coenzyme A biosynthesis; CoA from (R)-pantothenate: step 4/5. Reversibly transfers an adenylyl group from ATP to 4'-phosphopantetheine, yielding dephospho-CoA (dPCoA) and pyrophosphate. The sequence is that of Phosphopantetheine adenylyltransferase from Corynebacterium diphtheriae (strain ATCC 700971 / NCTC 13129 / Biotype gravis).